The following is a 1241-amino-acid chain: Plasma membrane calcium-transporting ATPase 4 (1241 aa).

Residues 1-92 (MTNPSDRVLP…NVIPPKKPKT (92 aa)) lie on the Cytoplasmic side of the membrane. A Phosphoserine modification is found at Ser-13. Residues 93 to 113 (FLELVWEALQDVTLIILEIAA) traverse the membrane as a helical segment. At 114-150 (IISLVLSFYRPAGEENELCGQVATTPEDENEAQAGWI) the chain is on the extracellular side. The helical transmembrane segment at 151–171 (EGAAILFSVIIVVLVTAFNDW) threads the bilayer. At 172–356 (SKEKQFRGLQ…KEKSVLQGKL (185 aa)) the chain is on the cytoplasmic side. The tract at residues 294-318 (EGEKKKKGKKQGVPENRNKAKTQDG) is disordered. Residue Ser-328 is modified to Phosphoserine. Residues 357–376 (TRLAVQIGKAGLLMSALTVF) traverse the membrane as a helical segment. The Extracellular segment spans residues 377–409 (ILILYFVIDNFVINRRPWLPECTPIYIQYFVKF). The chain crosses the membrane as a helical span at residues 410 to 427 (FIIGITVLVVAVPEGLPL). Residues 428–840 (AVTISLAYSV…MWGRNVYDSI (413 aa)) lie on the Cytoplasmic side of the membrane. The active-site 4-aspartylphosphate intermediate is Asp-465. Mg(2+)-binding residues include Asp-785 and Asp-789. A helical transmembrane segment spans residues 841-860 (SKFLQFQLTVNVVAVIVAFT). Residues 861–870 (GACITQDSPL) lie on the Extracellular side of the membrane. Residues 871–891 (KAVQMLWVNLIMDTFASLALA) traverse the membrane as a helical segment. At 892–911 (TEPPTESLLKRRPYGRNKPL) the chain is on the cytoplasmic side. The helical transmembrane segment at 912–934 (ISRTMMKNILGHAFYQLIVIFIL) threads the bilayer. The Extracellular portion of the chain corresponds to 935–952 (VFAGEKFFDIDSGRKAPL). The chain crosses the membrane as a helical span at residues 953 to 974 (HSPPSQHYTIVFNTFVLMQLFN). Residues 975 to 993 (EINSRKIHGEKNVFSGIYR) lie on the Cytoplasmic side of the membrane. The chain crosses the membrane as a helical span at residues 994 to 1015 (NIIFCSVVLGTFICQIFIVEFG). The Extracellular segment spans residues 1016-1025 (GKPFSCTSLS). The chain crosses the membrane as a helical span at residues 1026–1047 (LSQWLWCLFIGIGELLWGQFIS). Residues 1048 to 1241 (AIPTRSLKFL…SSLQSLETSV (194 aa)) lie on the Cytoplasmic side of the membrane. The tract at residues 1086 to 1103 (LRRGQILWFRGLNRIQTQ) is calmodulin-binding subdomain A. A Phosphothreonine; by PKC modification is found at Thr-1102. The calmodulin-binding subdomain B stretch occupies residues 1104–1113 (IDVINTFQTG).

Belongs to the cation transport ATPase (P-type) (TC 3.A.3) family. Type IIB subfamily. In terms of assembly, interacts with PDZD11. Interacts with SLC35G1 and STIM1. Interacts with calmodulin. Isoform XB is the most abundant isoform and is expressed ubiquitously. Isoforms containing segment Z have only been detected in heart, while isoforms containing segment a have been found in heart, stomach and brain cortex.

It is found in the cell membrane. The protein resides in the cell projection. The protein localises to the cilium. It localises to the flagellum membrane. It catalyses the reaction Ca(2+)(in) + ATP + H2O = Ca(2+)(out) + ADP + phosphate + H(+). Its activity is regulated as follows. Activated by calcium/calmodulin. Its function is as follows. Calcium/calmodulin-regulated and magnesium-dependent enzyme that catalyzes the hydrolysis of ATP coupled with the transport of calcium out of the cell. By regulating sperm cell calcium homeostasis, may play a role in sperm motility. The protein is Plasma membrane calcium-transporting ATPase 4 of Homo sapiens (Human).